Consider the following 187-residue polypeptide: Homeobox expressed in ES cells 1-B (187 aa).

A DNA-binding region (homeobox) is located at residues 110–169 (GRRPRTAFTRSQIEILENVFRVNSYPGIDVREELASKLALDEDRIQIWFQNRRAKLKRSH).

This sequence belongs to the ANF homeobox family. As to quaternary structure, the N-terminus interacts with the LIM 2 domain of zyx. As to expression, first expressed at a low level in the late blastula stage (stage 9) in most cells of the animal half of the embryo. Following this, predominantly expressed in two zones; the dorsal blastopore lip (Spemann organizer) at the beginning of gastrulation, and subsequently in the anterior part of the neural anlage (the region of future forebrain).

It localises to the nucleus. Functionally, regulates the earliest stages of development of the anterior neural plate. Plays a role in forebrain development by inhibiting the expression of otx2 and pax6 in the rostral region of the anterior neural plate. Necessary for both neural differentiation and neural patterning. Controls Spemann organizer development. May act as a transcriptional repressor. This chain is Homeobox expressed in ES cells 1-B (hesx1-b), found in Xenopus laevis (African clawed frog).